Reading from the N-terminus, the 82-residue chain is Delta-actitoxin-Aeq2a (82 aa).

The N-terminal stretch at 1–19 is a signal peptide; sequence MNRLMILVFAAVFLALASA. Residues 20–26 constitute a propeptide that is removed on maturation; sequence DEDVDIA. Disulfide bonds link C32/C79, C34/C69, and C62/C80.

The protein belongs to the sea anemone sodium channel inhibitory toxin family. Type I subfamily.

Its subcellular location is the secreted. It is found in the nematocyst. Functionally, binds specifically to voltage-gated sodium channels (Nav), thereby delaying their inactivation during signal transduction. Causes death to crabs (minimum lethal dose of 25 ug/kg) and mice. The sequence is that of Delta-actitoxin-Aeq2a from Actinia equina (Beadlet anemone).